The chain runs to 455 residues: Enolase (455 aa).

A (2R)-2-phosphoglycerate-binding site is contributed by Q166. Catalysis depends on E208, which acts as the Proton donor. D249, E311, and D338 together coordinate Mg(2+). (2R)-2-phosphoglycerate contacts are provided by K363, R392, S393, and K414. Residue K363 is the Proton acceptor of the active site.

Belongs to the enolase family. Requires Mg(2+) as cofactor.

The protein resides in the cytoplasm. It localises to the secreted. The protein localises to the cell surface. The enzyme catalyses (2R)-2-phosphoglycerate = phosphoenolpyruvate + H2O. Its pathway is carbohydrate degradation; glycolysis; pyruvate from D-glyceraldehyde 3-phosphate: step 4/5. Its function is as follows. Catalyzes the reversible conversion of 2-phosphoglycerate (2-PG) into phosphoenolpyruvate (PEP). It is essential for the degradation of carbohydrates via glycolysis. In Mycoplasma mobile (strain ATCC 43663 / 163K / NCTC 11711) (Mesomycoplasma mobile), this protein is Enolase.